Here is a 361-residue protein sequence, read N- to C-terminus: UDP-N-acetylglucosamine--N-acetylmuramyl-(pentapeptide) pyrophosphoryl-undecaprenol N-acetylglucosamine transferase (361 aa).

UDP-N-acetyl-alpha-D-glucosamine-binding positions include 21 to 23 (TGG), Asn-131, Arg-172, Ser-195, Ile-250, and Gln-295.

The protein belongs to the glycosyltransferase 28 family. MurG subfamily.

It localises to the cell inner membrane. It catalyses the reaction di-trans,octa-cis-undecaprenyl diphospho-N-acetyl-alpha-D-muramoyl-L-alanyl-D-glutamyl-meso-2,6-diaminopimeloyl-D-alanyl-D-alanine + UDP-N-acetyl-alpha-D-glucosamine = di-trans,octa-cis-undecaprenyl diphospho-[N-acetyl-alpha-D-glucosaminyl-(1-&gt;4)]-N-acetyl-alpha-D-muramoyl-L-alanyl-D-glutamyl-meso-2,6-diaminopimeloyl-D-alanyl-D-alanine + UDP + H(+). Its pathway is cell wall biogenesis; peptidoglycan biosynthesis. Cell wall formation. Catalyzes the transfer of a GlcNAc subunit on undecaprenyl-pyrophosphoryl-MurNAc-pentapeptide (lipid intermediate I) to form undecaprenyl-pyrophosphoryl-MurNAc-(pentapeptide)GlcNAc (lipid intermediate II). The protein is UDP-N-acetylglucosamine--N-acetylmuramyl-(pentapeptide) pyrophosphoryl-undecaprenol N-acetylglucosamine transferase of Solibacter usitatus (strain Ellin6076).